The primary structure comprises 211 residues: Probable nicotinate-nucleotide adenylyltransferase (211 aa).

This sequence belongs to the NadD family.

The enzyme catalyses nicotinate beta-D-ribonucleotide + ATP + H(+) = deamido-NAD(+) + diphosphate. Its pathway is cofactor biosynthesis; NAD(+) biosynthesis; deamido-NAD(+) from nicotinate D-ribonucleotide: step 1/1. In terms of biological role, catalyzes the reversible adenylation of nicotinate mononucleotide (NaMN) to nicotinic acid adenine dinucleotide (NaAD). In Legionella pneumophila (strain Lens), this protein is Probable nicotinate-nucleotide adenylyltransferase.